A 128-amino-acid chain; its full sequence is MARVKRSVNAKKKRREILKSAKGYRGQRSRLYRKAKEQWLHSMTYAYRDRRARKGEFRKLWIQRINAAARMNGITYNRLIQGLRLAEIEVDRKILADLAVNDFAAFSAICEAAKAALPEDVNAPKAAA.

Belongs to the bacterial ribosomal protein bL20 family.

In terms of biological role, binds directly to 23S ribosomal RNA and is necessary for the in vitro assembly process of the 50S ribosomal subunit. It is not involved in the protein synthesizing functions of that subunit. The polypeptide is Large ribosomal subunit protein bL20 (Corynebacterium efficiens (strain DSM 44549 / YS-314 / AJ 12310 / JCM 11189 / NBRC 100395)).